The sequence spans 248 residues: Probable septum site-determining protein MinC (248 aa).

A disordered region spans residues 94-125; that stretch reads GMPPAMRGGQPAADFEAPAGEPQANPGAPEPQ.

The protein belongs to the MinC family. As to quaternary structure, interacts with MinD and FtsZ.

In terms of biological role, cell division inhibitor that blocks the formation of polar Z ring septums. Rapidly oscillates between the poles of the cell to destabilize FtsZ filaments that have formed before they mature into polar Z rings. Prevents FtsZ polymerization. The protein is Probable septum site-determining protein MinC of Brucella abortus (strain S19).